Reading from the N-terminus, the 883-residue chain is Bifunctional heparan sulfate N-deacetylase/N-sulfotransferase 2 (883 aa).

Residues 1-18 are Cytoplasmic-facing; sequence MLQLWKVVRPARQLELHR. A helical; Signal-anchor for type II membrane protein transmembrane segment spans residues 19-39; sequence LILLLIAFSLGSMGFLAYYVS. Topologically, residues 40 to 883 are lumenal; it reads TSPKAKEPLP…REELQHSSLG (844 aa). The heparan sulfate N-deacetylase 2 stretch occupies residues 41–597; sequence SPKAKEPLPL…KRHKDIWSKE (557 aa). Residues 49–81 are disordered; the sequence is PLPLGDCSSGGAAGPGPARPPVPPRPPRPPETA. The span at 65–78 shows a compositional bias: pro residues; it reads PARPPVPPRPPRPP. N-linked (GlcNAc...) asparagine glycosylation is found at Asn-233, Asn-350, and Asn-400. Residues 598–883 are heparan sulfate N-sulfotransferase 2; sequence KTCDRLPKFL…REELQHSSLG (286 aa). Residue Lys-613 is the For sulfotransferase activity of the active site. 613–617 is a 3'-phosphoadenylyl sulfate binding site; that stretch reads KTGTT. Asn-666 carries an N-linked (GlcNAc...) asparagine glycan. Ser-711 is a binding site for 3'-phosphoadenylyl sulfate. 2 N-linked (GlcNAc...) asparagine glycosylation sites follow: Asn-726 and Asn-802. Cys-817 and Cys-827 are oxidised to a cystine. Residue 832 to 836 coordinates 3'-phosphoadenylyl sulfate; the sequence is KGRRY.

The protein belongs to the sulfotransferase 1 family. NDST subfamily. As to quaternary structure, monomer.

It is found in the golgi apparatus membrane. It catalyses the reaction alpha-D-glucosaminyl-[heparan sulfate](n) + 3'-phosphoadenylyl sulfate = N-sulfo-alpha-D-glucosaminyl-[heparan sulfate](n) + adenosine 3',5'-bisphosphate + 2 H(+). It functions in the pathway glycan metabolism; heparan sulfate biosynthesis. Its pathway is glycan metabolism; heparin biosynthesis. Essential bifunctional enzyme that catalyzes both the N-deacetylation and the N-sulfation of glucosamine (GlcNAc) of the glycosaminoglycan in heparan sulfate. Modifies the GlcNAc-GlcA disaccharide repeating sugar backbone to make N-sulfated heparosan, a prerequisite substrate for later modifications in heparin biosynthesis. Plays a role in determining the extent and pattern of sulfation of heparan sulfate. Required for the exosomal release of SDCBP, CD63 and syndecan. The polypeptide is Bifunctional heparan sulfate N-deacetylase/N-sulfotransferase 2 (NDST2) (Homo sapiens (Human)).